The following is a 255-amino-acid chain: 3-hydroxyacyl-CoA dehydrogenase type-2 (255 aa).

NAD(+)-binding residues include Ser14, Leu16, Asp35, Asp58, Val59, and Cys85. Ser149 lines the substrate pocket. NAD(+)-binding residues include Tyr162, Lys166, Phe195, and Thr197. The active-site Proton acceptor is the Tyr162.

The protein belongs to the short-chain dehydrogenases/reductases (SDR) family. Component of mitochondrial ribonuclease P, a complex composed of rswl/MRPP1, scu/MRPP2 and mldr/MRPP3. As to expression, found in many tissues including CNS, imaginal disks and salivary glands. Highest expression in both embryonic gonadal primordia and mature ovaries and testes.

The protein localises to the mitochondrion. The catalysed reaction is a (3S)-3-hydroxyacyl-CoA + NAD(+) = a 3-oxoacyl-CoA + NADH + H(+). The enzyme catalyses (3S)-3-hydroxybutanoyl-CoA + NAD(+) = acetoacetyl-CoA + NADH + H(+). It catalyses the reaction testosterone + NAD(+) = androst-4-ene-3,17-dione + NADH + H(+). It carries out the reaction 5alpha-androstane-3alpha,17beta-diol + NAD(+) = 17beta-hydroxy-5alpha-androstan-3-one + NADH + H(+). The catalysed reaction is 17beta-estradiol + NAD(+) = estrone + NADH + H(+). The enzyme catalyses ursodeoxycholate + NAD(+) = 7-oxolithocholate + NADH + H(+). It catalyses the reaction 3beta,7beta-dihydroxy-5beta-cholan-24-oate + NAD(+) = 3beta-hydroxy-7-oxo-5beta-cholan-24-oate + NADH + H(+). It carries out the reaction 11-dehydrocorticosterone + NAD(+) = pregn-4-ene-3,11,20,21-tetraone + NADH + H(+). The catalysed reaction is cortisone + NAD(+) = 17alpha-hydroxypregn-4-en-3,11,20-trione-21-al + NADH + H(+). The enzyme catalyses cortisol + NAD(+) = 11beta,17alpha-dihydroxypregn-4-ene-3,20,21-trione + NADH + H(+). It catalyses the reaction 5alpha-pregnan-20beta-ol-3-one + NAD(+) = 5alpha-pregnane-3,20-dione + NADH + H(+). It carries out the reaction 17beta-hydroxy-5alpha-androstan-3-one + NAD(+) = 5alpha-androstan-3,17-dione + NADH + H(+). In terms of biological role, mitochondrial dehydrogenase involved in pathways of fatty acid, and steroid metabolism. Versatile enzyme presenting two types of activity; L-3-hydroxyacyl-CoA dehydrogenase ((3S)-3-hydroxyacyl-CoA dehydrogenase) activity and hydroxysteroid dehydrogenase (HSD) activity with a wide substrate spectrum. As a (3S)-3-hydroxyacyl-CoA dehydrogenase, it functions in the third step of the fatty acid beta-oxidation pathway, a major metabolic process in which fatty acids are oxidized to provide a significant source of energy, while also generating acyl-CoA metabolites used by many metabolic routes. As a HSD, it functions in the degradation pathways of glucocorticoids and sex steroids and epimerization of bile acids; catalyzes the beta-oxidation at position 17 of androgens and estrogens, has 3-alpha-hydroxysteroid dehydrogenase activity with androsterone, and carries out oxidative conversions of 7-beta-hydroxylated bile acids like ursodeoxycholate or isoursodeoxycholate (also known as 3-beta,7-beta-dihydroxy-5-beta-cholan-24-oate or 7-beta-hydroxyisolithocholate, respectively). Also exhibits 20-beta-OH and 21-OH dehydrogenase activities with C21 steroids. Essential for structural and functional integrity of mitochondria. Required for cell survival during embryonic development. May play a role in germline formation. Its function is as follows. In addition to mitochondrial dehydrogenase activity, moonlights as a component of mitochondrial ribonuclease P, a complex that cleaves tRNA molecules in their 5'-ends. Essential for the structural and functional integrity of mitochondria. Function is essential for pupal development. In Drosophila melanogaster (Fruit fly), this protein is 3-hydroxyacyl-CoA dehydrogenase type-2.